Reading from the N-terminus, the 198-residue chain is Suppressor of cytokine signaling 2 (198 aa).

The segment at 1–75 is interaction with AREL1; sequence MTLRCLESSG…PEGTFLIRDS (75 aa). Residues 6–30 form a disordered region; the sequence is LESSGNGAEGAQSQWGTAGSAEEPS. A compositionally biased stretch (polar residues) spans 8-22; that stretch reads SSGNGAEGAQSQWGT. Residues Ser30 and Ser52 each carry the phosphoserine modification. One can recognise an SH2 domain in the interval 48-156; that stretch reads WYWGSMTVNE…TVHLYLTKPL (109 aa). The 47-residue stretch at 151–197 folds into the SOCS box domain; that stretch reads YLTKPLYTSAPPLQHLCRLTINKCTSTVWGLPLPTRLKDYLEEYKFQ. Lys173 is covalently cross-linked (Glycyl lysine isopeptide (Lys-Gly) (interchain with G-Cter in ubiquitin)).

In terms of assembly, substrate-recognition component of the ECS(SOCS2) complex, composed of SOCS2, CUL5, ELOB, ELOC and RNF7/RBX2. Interacts with IGF1R. Interacts with DCUN1D1. Ubiquitinated; mediated by AREL1 and leading to its subsequent proteasomal degradation. Ubiquitination is dependent on its phosphorylation at Ser-52, by PKC. Ubiquitination is stimulated by LPS. Post-translationally, phosphorylation at Ser-52 by PKC facilitates its ubiquitination and proteasomal degradation.

It is found in the cytoplasm. Its pathway is protein modification; protein ubiquitination. In terms of biological role, substrate-recognition component of a cullin-5-RING E3 ubiquitin-protein ligase complex (ECS complex, also named CRL5 complex), which mediates the ubiquitination and subsequent proteasomal degradation of target proteins, such as EPOR and GHR. Specifically recognizes and binds phosphorylated proteins via its SH2 domain, promoting their ubiquitination. The ECS(SOCS2) complex acts as a key regulator of growth hormone receptor (GHR) levels by mediating ubiquitination and degradation of GHR, following GHR phosphorylation by JAK2. The ECS(SOCS2) also catalyzes ubiquitination and degradation of JAK2-phosphorylated EPOR. The sequence is that of Suppressor of cytokine signaling 2 (SOCS2) from Bos taurus (Bovine).